The following is a 380-amino-acid chain: Cytochrome b (380 aa).

Helical transmembrane passes span 34–54 (FGSLLGICLTTQILTGLLLAA), 78–99 (WLIRNLHANGASFFFICIYMHV), 114–134 (WNTGVILLLTLMATAFVGYVL), and 179–199 (FFTLHFLLPFMIMGLTLIHLT). H84 and H98 together coordinate heme b. Residues H183 and H197 each coordinate heme b. Residue H202 participates in a ubiquinone binding. 4 helical membrane-spanning segments follow: residues 227 to 247 (LKDILGFMLMFLPLMTLALFS), 289 to 309 (LGGVLALAASMLVLFLAPLLH), 321 to 341 (LSQLLFWTLTANLLILTWVGS), and 348 to 368 (FMIIGQLASLTYFTILLILFP).

The protein belongs to the cytochrome b family. The cytochrome bc1 complex contains 11 subunits: 3 respiratory subunits (MT-CYB, CYC1 and UQCRFS1), 2 core proteins (UQCRC1 and UQCRC2) and 6 low-molecular weight proteins (UQCRH/QCR6, UQCRB/QCR7, UQCRQ/QCR8, UQCR10/QCR9, UQCR11/QCR10 and a cleavage product of UQCRFS1). This cytochrome bc1 complex then forms a dimer. Heme b serves as cofactor.

It is found in the mitochondrion inner membrane. Functionally, component of the ubiquinol-cytochrome c reductase complex (complex III or cytochrome b-c1 complex) that is part of the mitochondrial respiratory chain. The b-c1 complex mediates electron transfer from ubiquinol to cytochrome c. Contributes to the generation of a proton gradient across the mitochondrial membrane that is then used for ATP synthesis. This Balearica pavonina (Black crowned-crane) protein is Cytochrome b (MT-CYB).